A 172-amino-acid polypeptide reads, in one-letter code: WW domain binding protein VOPP1 (172 aa).

The N-terminal stretch at 1 to 22 (MARPLGRVAALLLGLLMECTEA) is a signal peptide. Residues 23–60 (KKHCWYFEGLYPTYYICRSYEDCCGSRCCVRALSIQRL) are Extracellular-facing. A helical membrane pass occupies residues 61–81 (WYFWFLLMMGVLFCCGAGFFI). Residues 82–172 (RRRMYPPPLI…PPYEQVVKDK (91 aa)) are Cytoplasmic-facing. Residues 139–172 (QVQPNSPHGGTTYPPPPSYCNTPPPPYEQVVKDK) are disordered. The segment covering 151-165 (YPPPPSYCNTPPPPY) has biased composition (pro residues).

It belongs to the VOPP1/ECOP family. Interacts with WWOX (via WW domain).

The protein resides in the cytoplasmic vesicle membrane. It is found in the late endosome membrane. Its subcellular location is the lysosome membrane. Increases the transcriptional activity of NFKB1 by facilitating its nuclear translocation, DNA-binding and associated apoptotic response, when overexpressed. May sequester WWOX in lysosomal vesicles and thereby regulate WWOX role as tumor suppressor. The polypeptide is WW domain binding protein VOPP1 (Rattus norvegicus (Rat)).